Consider the following 343-residue polypeptide: S-adenosylmethionine:tRNA ribosyltransferase-isomerase (343 aa).

The protein belongs to the QueA family. As to quaternary structure, monomer.

Its subcellular location is the cytoplasm. It catalyses the reaction 7-aminomethyl-7-carbaguanosine(34) in tRNA + S-adenosyl-L-methionine = epoxyqueuosine(34) in tRNA + adenine + L-methionine + 2 H(+). Its pathway is tRNA modification; tRNA-queuosine biosynthesis. Functionally, transfers and isomerizes the ribose moiety from AdoMet to the 7-aminomethyl group of 7-deazaguanine (preQ1-tRNA) to give epoxyqueuosine (oQ-tRNA). The sequence is that of S-adenosylmethionine:tRNA ribosyltransferase-isomerase from Pelobacter propionicus (strain DSM 2379 / NBRC 103807 / OttBd1).